A 478-amino-acid polypeptide reads, in one-letter code: Glycogen synthase (478 aa).

Residue Lys-15 coordinates ADP-alpha-D-glucose.

It belongs to the glycosyltransferase 1 family. Bacterial/plant glycogen synthase subfamily.

The enzyme catalyses [(1-&gt;4)-alpha-D-glucosyl](n) + ADP-alpha-D-glucose = [(1-&gt;4)-alpha-D-glucosyl](n+1) + ADP + H(+). It functions in the pathway glycan biosynthesis; glycogen biosynthesis. Synthesizes alpha-1,4-glucan chains using ADP-glucose. In Clostridium botulinum (strain Alaska E43 / Type E3), this protein is Glycogen synthase.